We begin with the raw amino-acid sequence, 182 residues long: Mitochondrial FAD-linked sulfhydryl oxidase erv1 (182 aa).

In terms of domain architecture, ERV/ALR sulfhydryl oxidase spans arginine 75 to alanine 177. Residues glutamate 81–tryptophan 87, histidine 91, and tyrosine 120 each bind FAD. 2 disulfides stabilise this stretch: cysteine 122–cysteine 125 and cysteine 153–cysteine 170. FAD contacts are provided by residues cysteine 153 to lysine 165 and lysine 176 to alanine 177.

FAD serves as cofactor.

Its subcellular location is the mitochondrion intermembrane space. It catalyses the reaction 2 R'C(R)SH + O2 = R'C(R)S-S(R)CR' + H2O2. In terms of biological role, FAD-dependent sulfhydryl oxidase that catalyzes disulfide bond formation. Required for the import and folding of small cysteine-containing proteins in the mitochondrial intermembrane space (IMS). This chain is Mitochondrial FAD-linked sulfhydryl oxidase erv1 (erv1), found in Schizosaccharomyces pombe (strain 972 / ATCC 24843) (Fission yeast).